Reading from the N-terminus, the 366-residue chain is MSYNTFGHIFRVTTWGESHGPALGATVDGCPPGVAIEAEAIQHWLDRRKPGQNRFTTQRQEPDAVRILSGTFEGRSTGTPIQLMIENTDQRSKDYGEIARSFRPGHADIAYHWKYGLRDYRGGGRSSARETAARVAAGGVARAALAALVPGLRIEGYMVQIGPHAIDRARFDADEIERNPFWCPDSDTAALWADYLDGLRKAHDSVGAIVEVRASGVPAGLGAPIYGKLDSDLAAAMMTINAVKGVEIGEGMAAACLTGSANADEIRMGPEGPEFLTNHAGGILGGISTGQDVVVRFAVKPTSSILTPRRSVTTDGCEVEVVTKGRHDPCVGIRAVPVGEAMMACVLLDHLLLDRGQTGGLRGTIG.

Residues arginine 48 and arginine 54 each contribute to the NADP(+) site. Residues 125–127, 241–242, glycine 285, 300–304, and arginine 326 each bind FMN; these read RSS, NA, and KPTSS.

The protein belongs to the chorismate synthase family. As to quaternary structure, homotetramer. Requires FMNH2 as cofactor.

It catalyses the reaction 5-O-(1-carboxyvinyl)-3-phosphoshikimate = chorismate + phosphate. Its pathway is metabolic intermediate biosynthesis; chorismate biosynthesis; chorismate from D-erythrose 4-phosphate and phosphoenolpyruvate: step 7/7. Catalyzes the anti-1,4-elimination of the C-3 phosphate and the C-6 proR hydrogen from 5-enolpyruvylshikimate-3-phosphate (EPSP) to yield chorismate, which is the branch point compound that serves as the starting substrate for the three terminal pathways of aromatic amino acid biosynthesis. This reaction introduces a second double bond into the aromatic ring system. This Cereibacter sphaeroides (strain ATCC 17029 / ATH 2.4.9) (Rhodobacter sphaeroides) protein is Chorismate synthase.